The primary structure comprises 331 residues: Adenosine deaminase (331 aa).

The Zn(2+) site is built by His-12 and His-14. Substrate-binding residues include His-14 and Asp-16. Zn(2+) is bound at residue His-197. Glu-200 acts as the Proton donor in catalysis. Zn(2+) is bound at residue Asp-278.

It belongs to the metallo-dependent hydrolases superfamily. Adenosine and AMP deaminases family. Adenosine deaminase subfamily. Zn(2+) serves as cofactor.

The enzyme catalyses adenosine + H2O + H(+) = inosine + NH4(+). It catalyses the reaction 2'-deoxyadenosine + H2O + H(+) = 2'-deoxyinosine + NH4(+). In terms of biological role, catalyzes the hydrolytic deamination of adenosine and 2-deoxyadenosine. This Shewanella pealeana (strain ATCC 700345 / ANG-SQ1) protein is Adenosine deaminase.